The chain runs to 125 residues: UPF0251 protein Dhaf_1981 (125 aa).

This sequence belongs to the UPF0251 family.

The protein is UPF0251 protein Dhaf_1981 of Desulfitobacterium hafniense (strain DSM 10664 / DCB-2).